A 512-amino-acid polypeptide reads, in one-letter code: Centrosomal protein CCDC61 (512 aa).

An N-acetylmethionine modification is found at Met1. Positions 1-142 (MEQPAGLQVD…PLPLPYQGKP (142 aa)) are head domain. Coiled-coil stretches lie at residues 176 to 203 (WHLR…REEA) and 246 to 273 (RRLA…NCEL). Thr282 is modified (phosphothreonine). Disordered stretches follow at residues 282–415 (TLPA…SFRS) and 430–472 (SQSV…HLAS). Positions 287 to 300 (AREDRALSSRERST) are enriched in basic and acidic residues. Residues Ser328, Ser330, Ser372, and Ser375 each carry the phosphoserine modification. Positions 406–415 (RSSSVDSFRS) are enriched in low complexity. Residues Ser447 and Ser473 each carry the phosphoserine modification.

It belongs to the CCDC61 family. In terms of assembly, forms homodimers (via head domain). Interacts with CEP170. Interacts with PCM1 and CEP131. Binds tubulin.

The protein resides in the cytoplasm. It is found in the cytoskeleton. The protein localises to the microtubule organizing center. Its subcellular location is the centrosome. It localises to the centriolar satellite. The protein resides in the cilium basal body. Microtubule-binding centrosomal protein required for centriole cohesion, independently of the centrosome-associated protein/CEP250 and rootletin/CROCC linker. In interphase, required for anchoring microtubule at the mother centriole subdistal appendages and for centrosome positioning. During mitosis, may be involved in spindle assembly and chromatin alignment by regulating the organization of spindle microtubules into a symmetrical structure. Plays a non-essential role in ciliogenesis. This is Centrosomal protein CCDC61 from Rattus norvegicus (Rat).